A 183-amino-acid polypeptide reads, in one-letter code: Phosphinothricin N-acetyltransferase (183 aa).

The 162-residue stretch at 8 to 169 (VEIRPATAAD…DVGFWQRDFE (162 aa)) folds into the N-acetyltransferase domain. Acetyl-CoA-binding positions include 91-93 (VYV), 99-104 (RLGLGS), and asparagine 130.

It belongs to the acetyltransferase family. PAT/BAR subfamily.

The catalysed reaction is phosphinothricin + acetyl-CoA = N-acetylphosphinothricin + CoA + H(+). Its function is as follows. Inactivates phosphinothricin (PPT) by transfer of an acetyl group from acetyl CoA. This enzyme is an effector of phosphinothricin tripeptide (PTT or bialaphos) resistance. This Streptomyces viridochromogenes (strain DSM 40736 / JCM 4977 / BCRC 1201 / Tue 494) protein is Phosphinothricin N-acetyltransferase.